Consider the following 219-residue polypeptide: MRRPGAVVRRAGGYVTNLMPTAAGDPIGGGLGDQVYNRLLGERIIFLGQAVDDDIANKITAQLLLLASDPDKDIYLYINSPGGSITAGMAIYDTMQYIKNDVVTIAMGMAASMGQFLLSAGTPGKRFALPNAEILIHQPSAGLAGSASDIKIHAERLLHTKKRMAELTAFHTGQTVEQVTRDSDRDRWFDPVEAKEYGLIDDIMPTAAGMPGGGGTGAA.

Serine 112 serves as the catalytic Nucleophile. The active site involves histidine 137.

This sequence belongs to the peptidase S14 family. As to quaternary structure, fourteen ClpP subunits assemble into 2 heptameric rings which stack back to back to give a disk-like structure with a central cavity, resembling the structure of eukaryotic proteasomes.

The protein localises to the cytoplasm. It carries out the reaction Hydrolysis of proteins to small peptides in the presence of ATP and magnesium. alpha-casein is the usual test substrate. In the absence of ATP, only oligopeptides shorter than five residues are hydrolyzed (such as succinyl-Leu-Tyr-|-NHMec, and Leu-Tyr-Leu-|-Tyr-Trp, in which cleavage of the -Tyr-|-Leu- and -Tyr-|-Trp bonds also occurs).. Cleaves peptides in various proteins in a process that requires ATP hydrolysis. Has a chymotrypsin-like activity. Plays a major role in the degradation of misfolded proteins. The chain is ATP-dependent Clp protease proteolytic subunit 3 from Streptomyces avermitilis (strain ATCC 31267 / DSM 46492 / JCM 5070 / NBRC 14893 / NCIMB 12804 / NRRL 8165 / MA-4680).